Consider the following 289-residue polypeptide: ATP synthase subunit a (289 aa).

6 consecutive transmembrane segments (helical) span residues 43–63 (AFHV…VLIF), 101–121 (SAVI…MNAV), 160–180 (LSVF…GGFI), 193–213 (LFVQ…TLIA), 232–252 (VFIL…GLGV), and 259–279 (AVFH…LTIV).

It belongs to the ATPase A chain family. In terms of assembly, F-type ATPases have 2 components, CF(1) - the catalytic core - and CF(0) - the membrane proton channel. CF(1) has five subunits: alpha(3), beta(3), gamma(1), delta(1), epsilon(1). CF(0) has three main subunits: a(1), b(2) and c(9-12). The alpha and beta chains form an alternating ring which encloses part of the gamma chain. CF(1) is attached to CF(0) by a central stalk formed by the gamma and epsilon chains, while a peripheral stalk is formed by the delta and b chains.

The protein localises to the cell inner membrane. In terms of biological role, key component of the proton channel; it plays a direct role in the translocation of protons across the membrane. In Pseudomonas syringae pv. syringae (strain B728a), this protein is ATP synthase subunit a.